The sequence spans 229 residues: MYLRKISAPLMTMLLLNGCAYIPHKPLVDGTTSAQPAPASAPLPNGSIFQTVQPMNYGYQPLFEDRRPRNIGDTLTITLQENVSASKSSSANASRNGTSSFGVTTAPRYLDGLLGNGRADMEITGDNTFGGKGGANANNTFSGTITVTVDQVLANGNLHVVGEKQIAINQGTEFIRFSGVVNPRTISGSNSVTSTQVADARIEYVGNGYINEAQTMGWLQRFFLNVSPY.

The N-terminal stretch at 1–18 is a signal peptide; that stretch reads MYLRKISAPLMTMLLLNG. C19 carries the N-palmitoyl cysteine lipid modification. The S-diacylglycerol cysteine moiety is linked to residue C19.

The protein belongs to the FlgH family. As to quaternary structure, the basal body constitutes a major portion of the flagellar organelle and consists of four rings (L,P,S, and M) mounted on a central rod.

It localises to the cell outer membrane. It is found in the bacterial flagellum basal body. Assembles around the rod to form the L-ring and probably protects the motor/basal body from shearing forces during rotation. This chain is Flagellar L-ring protein 1 (flgH1), found in Yersinia pseudotuberculosis serotype I (strain IP32953).